The primary structure comprises 197 residues: Probable GTP-binding protein EngB (197 aa).

Residues 25-197 form the EngB-type G domain; the sequence is SAPEIAFAGR…VRDEFFKFTR (173 aa). GTP is bound by residues 33–40, 60–64, 79–82, 146–149, and 177–179; these read GRSNVGKS, GCTRQ, DLPG, TKID, and MSI. Mg(2+) is bound by residues serine 40 and threonine 62.

Belongs to the TRAFAC class TrmE-Era-EngA-EngB-Septin-like GTPase superfamily. EngB GTPase family. Requires Mg(2+) as cofactor.

Functionally, necessary for normal cell division and for the maintenance of normal septation. The polypeptide is Probable GTP-binding protein EngB (Wolbachia sp. subsp. Drosophila simulans (strain wRi)).